The primary structure comprises 555 residues: Sulfite reductase [ferredoxin] 1 (555 aa).

A cross-link (3'-(S-cysteinyl)-tyrosine (Tyr-Cys)) is located at residues 69–161 (YTQREQGYDG…SVGLQTTEAC (93 aa)). 4 residues coordinate [4Fe-4S] cluster: cysteine 417, cysteine 423, cysteine 463, and cysteine 467. A siroheme-binding site is contributed by cysteine 467.

This sequence belongs to the nitrite and sulfite reductase 4Fe-4S domain family. As to quaternary structure, monomer. Requires siroheme as cofactor. [4Fe-4S] cluster is required as a cofactor.

The enzyme catalyses hydrogen sulfide + 6 oxidized [2Fe-2S]-[ferredoxin] + 3 H2O = sulfite + 6 reduced [2Fe-2S]-[ferredoxin] + 7 H(+). Catalyzes the reduction of sulfite to sulfide, a step in the biosynthesis of sulfur-containing amino acids and cofactors. The polypeptide is Sulfite reductase [ferredoxin] 1 (sir1) (Mycolicibacterium paratuberculosis (strain ATCC BAA-968 / K-10) (Mycobacterium paratuberculosis)).